Consider the following 132-residue polypeptide: MKKALFLVGLVFTAGVISSCGGVSSQRTYEGAAVGAAVGAAAGVLLDKENRWRGGVIGAALGAILGGTITEIAQRAAKEAAQNNKPVVYRAEDGSQMVRAEPVEKRGNCTLVKTKYYQNGKLVKVEEKEVCE.

The N-terminal stretch at 1-19 is a signal peptide; it reads MKKALFLVGLVFTAGVISS. C20 carries N-palmitoyl cysteine lipidation. C20 carries S-diacylglycerol cysteine lipidation.

It localises to the cell membrane. This is an uncharacterized protein from Aquifex aeolicus (strain VF5).